We begin with the raw amino-acid sequence, 310 residues long: Vomeronasal type-1 receptor 101 (310 aa).

The Extracellular segment spans residues 1–19; the sequence is MNKVNILPSDTNMKITLFS. Residues 20–40 traverse the membrane as a helical segment; sequence ELSVGISANSILFFAHLCMFF. Residues 41-49 are Cytoplasmic-facing; that stretch reads EENRSKPID. Residues 50 to 70 form a helical membrane-spanning segment; it reads LCIAFLSLTQLMLLVTMGLIA. Residues 71–93 are Extracellular-facing; it reads ADMFMAQGIWDITTCRSLIYFHR. Cys85 and Cys172 are disulfide-bonded. The chain crosses the membrane as a helical span at residues 94–114; sequence LLRGFNLCAACLLHILWTFTL. Residues 115–134 are Cytoplasmic-facing; the sequence is SPRSSCLTKFKHKSPHHISG. A helical membrane pass occupies residues 135 to 155; sequence AYLFFCVLYMSFSSHLFVLVI. The Extracellular portion of the chain corresponds to 156–193; sequence ATSNLTSDHFMYVTQSCSLLPMSYSRTSTFSLLMVTRE. A glycan (N-linked (GlcNAc...) asparagine) is linked at Asn159. Residues 194-214 traverse the membrane as a helical segment; it reads VFLISLMALSSGYMVTLLWRH. Residues 215–238 lie on the Cytoplasmic side of the membrane; it reads KKQAQHLHSTRLSSKASPQQRATR. The helical transmembrane segment at 239 to 259 threads the bilayer; the sequence is TILLLMTFFVVFYILGTVIFH. Topologically, residues 260–268 are extracellular; it reads SRTKFKDGS. Residues 269–289 form a helical membrane-spanning segment; sequence IFYCVQIIVSHSYATISPFVF. At 290–310 the chain is on the cytoplasmic side; it reads VFSEKRIIKFFRSMCGRIVNT.

Belongs to the G-protein coupled receptor 1 family. As to expression, expressed in 1-4% of neurons of the vomeronasal organ. Only one pheromone receptor gene may be expressed in a particular neuron. Not expressed in the main olfactory epithelium.

The protein resides in the cell membrane. Its function is as follows. Putative pheromone receptor implicated in the regulation of social as well as reproductive behavior. The protein is Vomeronasal type-1 receptor 101 (Vom1r101) of Rattus norvegicus (Rat).